The primary structure comprises 920 residues: MSTNEQLAWDFDDGDVAEVRPDTGIARFAPGSEQWIAALQPTDDDAIRLDRFDVNTMTAEAAARLWARVAAWVESDQIAYYIDDSPVSSDAAYDARMRCLERLEAAFPSLDNPQSPTHRVGGSFSNDFASVRHPSRMMSLDDVFSIEELKDWYDSVIRDLDWPESKPLPMSCEVKIDGLALNLIYRNGVLEQGLTRGDGVTGEDITLNVRTIGSIPANLGGPKEDVPDFVEIRGEVFMRWDDFHTLNNEQEDAGRAPFANPRNAAAGSLRQKDPRITATRRLSFYAHGLGQLTWGPDHPRGTHDVVADQSQAYDLYTKWGVPVSPHNRAVTSFQEILDMIEYYGEHRGDIEHALDGIVVKVDDLGLQRTLGATSRAPRWAIAYKYPPEEVNTELLNITVQVGRTGRVTPVAVLKPVYVAGSTVARTTLHNGFEVKRKGILIGDTVVVRKAGDVIPELVGPVLERRKGREDQLREFVMPEFCPSCGAKLSPAKEGDKDIRCPNVESCPAQLTERVISLASRKAFDIEHLGEQSAIALTNPEENRPDSVATYAPNITEVLVAPGEEPDPYEPVEGLELPAAQKPVLSNESGLFNLTAADLRDVRVWREAAIVEVHETVGANGKKKKVRKRVGGSGLWHQVPAFWTAPTPAKKLTAKQLAERAQGEAAIESAETQGDTASETTGAPTGAEAPLGTMPGFAAASYPEYDVPADAVIVRVDHKTTRTGVTDVPVIIRPGENTRKMFDEMDKARHADLWRVLVALSIRRLGPPTARLIASAMGSLAAIENATIEDLTAIDGVGPEIAESVVNWFAATREPGDWRGATLRAWQAAGVGVDEAETSSLPQTLAGKTVVVTGSLEGYSRDSAKEAIIERGGKAAGSVSKKTDYVVIGANAGSKAAKAEELGIPMLSETQFAQLLATGTI.

NAD(+) contacts are provided by residues 90–94 (DAAYD), 139–140 (SL), and Glu173. Lys175 functions as the N6-AMP-lysine intermediate in the catalytic mechanism. Arg196, Glu235, Lys360, and Lys384 together coordinate NAD(+). Zn(2+) is bound by residues Cys481, Cys484, Cys500, and Cys506. Positions 659–691 (RAQGEAAIESAETQGDTASETTGAPTGAEAPLG) are disordered. Residues 669–682 (AETQGDTASETTGA) show a composition bias toward polar residues. Positions 839–920 (SLPQTLAGKT…FAQLLATGTI (82 aa)) constitute a BRCT domain.

The protein belongs to the NAD-dependent DNA ligase family. LigA subfamily. Mg(2+) serves as cofactor. Requires Mn(2+) as cofactor.

It carries out the reaction NAD(+) + (deoxyribonucleotide)n-3'-hydroxyl + 5'-phospho-(deoxyribonucleotide)m = (deoxyribonucleotide)n+m + AMP + beta-nicotinamide D-nucleotide.. Its function is as follows. DNA ligase that catalyzes the formation of phosphodiester linkages between 5'-phosphoryl and 3'-hydroxyl groups in double-stranded DNA using NAD as a coenzyme and as the energy source for the reaction. It is essential for DNA replication and repair of damaged DNA. This Bifidobacterium longum (strain NCC 2705) protein is DNA ligase.